Here is a 76-residue protein sequence, read N- to C-terminus: Large ribosomal subunit protein uL30 (76 aa).

Belongs to the universal ribosomal protein uL30 family. Part of the 50S ribosomal subunit.

The sequence is that of Large ribosomal subunit protein uL30 from Anaeromyxobacter dehalogenans (strain 2CP-1 / ATCC BAA-258).